A 529-amino-acid polypeptide reads, in one-letter code: tRNA-2-methylthio-N(6)-dimethylallyladenosine synthase (529 aa).

Residues 18–134 (RTYQVRTYGC…LPTLLERARH (117 aa)) form the MTTase N-terminal domain. [4Fe-4S] cluster-binding residues include Cys-27, Cys-63, Cys-97, Cys-171, Cys-175, and Cys-178. The Radical SAM core domain occupies 157–404 (RESAYAGWVS…IELQERISLE (248 aa)). Residues 407–486 (QAQVGRTLEL…PHHLIADGAL (80 aa)) form the TRAM domain.

Belongs to the methylthiotransferase family. MiaB subfamily. In terms of assembly, monomer. Requires [4Fe-4S] cluster as cofactor.

It localises to the cytoplasm. It catalyses the reaction N(6)-dimethylallyladenosine(37) in tRNA + (sulfur carrier)-SH + AH2 + 2 S-adenosyl-L-methionine = 2-methylsulfanyl-N(6)-dimethylallyladenosine(37) in tRNA + (sulfur carrier)-H + 5'-deoxyadenosine + L-methionine + A + S-adenosyl-L-homocysteine + 2 H(+). In terms of biological role, catalyzes the methylthiolation of N6-(dimethylallyl)adenosine (i(6)A), leading to the formation of 2-methylthio-N6-(dimethylallyl)adenosine (ms(2)i(6)A) at position 37 in tRNAs that read codons beginning with uridine. The chain is tRNA-2-methylthio-N(6)-dimethylallyladenosine synthase from Mycobacterium sp. (strain KMS).